We begin with the raw amino-acid sequence, 314 residues long: Epithelial-stromal interaction protein 1 (314 aa).

3 disordered regions span residues 1–72 (MYTR…PNES), 227–272 (WAGS…RAQI), and 289–314 (QGKS…SWGL). Residues 18–30 (SRDHAGAGQRREL) are compositionally biased toward basic and acidic residues. S39 is subject to Phosphoserine. Residues 71 to 180 (ESRRQKIQRI…QEDIRRATFR (110 aa)) adopt a coiled-coil conformation. Positions 232 to 272 (AHRDSPQKEDNPRLQKTRDGHQKNKLLETKGQHQEEERAQI) are enriched in basic and acidic residues. The segment covering 305–314 (NMNSTDSWGL) has biased composition (polar residues).

As to expression, expressed in the spleen, with expression in T cells, B cells, natural killer cells and natural killer T cells and high expression in monocytes and macrophages.

Its function is as follows. Plays a role in M1 macrophage polarization and is required for the proper regulation of gene expression during M1 versus M2 macrophage differentiation. Might play a role in RELA/p65 and STAT1 phosphorylation and nuclear localization upon activation of macrophages. This chain is Epithelial-stromal interaction protein 1 (Epsti1), found in Mus musculus (Mouse).